We begin with the raw amino-acid sequence, 507 residues long: E3 SUMO-protein ligase PIAS4 (507 aa).

Residue alanine 2 is modified to N-acetylalanine. Lysine 9 participates in a covalent cross-link: Glycyl lysine isopeptide (Lys-Gly) (interchain with G-Cter in SUMO2). One can recognise an SAP domain in the interval 12 to 46; the sequence is VMSFRVSDLQMLLGFVGRSKSGLKHELVTRALQLV. The LXXLL motif motif lies at 20–24; the sequence is LQMLL. Lysine 35 participates in a covalent cross-link: Glycyl lysine isopeptide (Lys-Gly) (interchain with G-Cter in SUMO); alternate. Residue lysine 35 forms a Glycyl lysine isopeptide (Lys-Gly) (interchain with G-Cter in SUMO2); alternate linkage. Residues lysine 56, lysine 59, lysine 68, and lysine 69 each participate in a glycyl lysine isopeptide (Lys-Gly) (interchain with G-Cter in SUMO2) cross-link. The residue at position 107 (lysine 107) is an N6-acetyllysine. Residues 112-272 form the PINIT domain; the sequence is LGRLPTKTLK…SVALYLVRQL (161 aa). Residue lysine 118 forms a Glycyl lysine isopeptide (Lys-Gly) (interchain with G-Cter in SUMO2) linkage. Lysine 128 participates in a covalent cross-link: Glycyl lysine isopeptide (Lys-Gly) (interchain with G-Cter in SUMO). The SP-RING-type zinc-finger motif lies at 304 to 385; it reads PDSEIATTGV…LSKILSECEG (82 aa). The Zn(2+) site is built by cysteine 335, histidine 337, cysteine 358, and cysteine 361. The interval 426-507 is disordered; the sequence is APASSTPGIG…PFQKGLVPAC (82 aa). The span at 434-450 shows a compositional bias: gly residues; sequence IGSGLSGPGSAGSGAGA. Acidic residues predominate over residues 474–489; it reads SEDEDEDEDDDEDEDE.

Belongs to the PIAS family. In terms of assembly, interacts with AR, GATA2, LEF1, TP53 and STAT1 (IFNG-induced). Interacts with TICAM1. Interacts with MTA1. Interacts with PRDM1/Blimp-1. Interacts with TRIM32 upon treatment with UVB and TNF-alpha. As to quaternary structure, (Microbial infection) Interacts ewith Moloney murine leukemia virus Capsid protein p30. Post-translationally, sumoylated. Lys-35 is the main site of sumoylation. Sumoylation is required for TCF4 sumoylation and transcriptional activation. Represses LEF1 transcriptional activity. SUMO1 is the preferred conjugate. Ubiquitinated by TRIM32 upon treatment with UVB and TNF-alpha. Widely expressed, with highest levels in testis. Also expressed in vascular endothelial cells, in primary keratinocytes and in the CNS, including cortex, olfactory bulb, spinal cord, thalamus and trigeminal ganglion. Low expression, if any, in liver and lung.

It localises to the nucleus. Its subcellular location is the PML body. It carries out the reaction S-ubiquitinyl-[E2 ubiquitin-conjugating enzyme]-L-cysteine + [acceptor protein]-L-lysine = [E2 ubiquitin-conjugating enzyme]-L-cysteine + N(6)-ubiquitinyl-[acceptor protein]-L-lysine.. It functions in the pathway protein modification; protein sumoylation. Functionally, functions as an E3-type small ubiquitin-like modifier (SUMO) ligase, stabilizing the interaction between UBE2I and the substrate, and as a SUMO-tethering factor. Mediates sumoylation of ALKBH5, AXIN1, CEBPA, KLF8, GATA2, PARK7, HERC2, MYB, TCF4 and RNF168. Plays a crucial role as a transcriptional coregulation in various cellular pathways, including the STAT pathway, the p53/TP53 pathway, the Wnt pathway and the steroid hormone signaling pathway. Involved in gene silencing. In Wnt signaling, represses LEF1 and enhances TCF4 transcriptional activities through promoting their sumoylations. Enhances the sumoylation of MTA1 and may participate in its paralog-selective sumoylation. Binds to AT-rich DNA sequences, known as matrix or scaffold attachment regions (MARs/SARs). Catalyzes conjugation of SUMO2 to KAT5 in response to DNA damage, facilitating repair of DNA double-strand breaks (DSBs) via homologous recombination (HR). Mediates sumoylation of PARP1 in response to PARP1 trapping to chromatin. Mediates sumoylation of KLF8, repressiing KLF8 transcriptional activity and cell cycle progression into G(1) phase. Sumoylates ALKBH5 downstream of MAPK8/JNK1 and MAPK9/JNK2 in response to reactive oxygen species (ROS), inhibiting ALKBH5 RNA demethylase activity. The sequence is that of E3 SUMO-protein ligase PIAS4 (Pias4) from Mus musculus (Mouse).